We begin with the raw amino-acid sequence, 488 residues long: Catalase (488 aa).

Residues 1 to 24 (MTDRRNLTTNQGVPIGDNQNSMTA) form a disordered region. Polar residues predominate over residues 7–23 (LTTNQGVPIGDNQNSMT). Residues His-55 and Asn-128 contribute to the active site. A heme-binding site is contributed by Tyr-338.

This sequence belongs to the catalase family. Heme is required as a cofactor.

The protein resides in the cytoplasm. The enzyme catalyses 2 H2O2 = O2 + 2 H2O. Its function is as follows. Decomposes hydrogen peroxide into water and oxygen; serves to protect cells from the toxic effects of hydrogen peroxide. The chain is Catalase (kat) from Listeria seeligeri.